Reading from the N-terminus, the 415-residue chain is Protrudin (415 aa).

The interval 1-24 (MQTSDRDLSGPEASPSGMPEVLSE) is disordered. Topologically, residues 1 to 66 (MQTSDRDLSG…AGDGVRYLLR (66 aa)) are cytoplasmic. The tract at residues 1–92 (MQTSDRDLSG…LFLTLNEGAW (92 aa)) is sufficient for homooligomerization. The interval 1–210 (MQTSDRDLSG…LYLLPLCWVL (210 aa)) is sufficient for localization to endoplasmic reticulum tubular network and for interactions with REEP1, REEP5, ATL1, ATL2, ATL3 and SPAST. The segment at 51–64 (LEPLKDAGDGVRYL) is necessary for interaction with RAB11A and function in neurite outgrowth. The helical transmembrane segment at 67–87 (WQMPLCSLLTCLGLNILFLTL) threads the bilayer. Asn88 is a topological domain (lumenal). Residues 89 to 109 (EGAWYSMGALMISVPALLGYL) form a helical membrane-spanning segment. Residues 110–192 (QEVCRGQLPE…NPVVSSQFYG (83 aa)) lie on the Cytoplasmic side of the membrane. Residues 193-213 (ALLGMVCMLYLLPLCWVLALL) constitute an intramembrane region (helical). The Cytoplasmic segment spans residues 214 to 415 (NSTLFLGNGD…CASCNQTLSK (202 aa)). Positions 254-290 (QGAGGRGLLDSSPAPTPTEDLTPGSVEEAEEAEPDEE) are disordered. The interval 275–365 (TPGSVEEAEE…GCAATFSVLK (91 aa)) is necessary for interaction with KIF5A. Positions 280–290 (EEAEEAEPDEE) are enriched in acidic residues. Residues 290–296 (EFKDAIE) are necessary for interaction with VAPA. An FYVE-type zinc finger spans residues 348–414 (TNNFGNCAGC…VCASCNQTLS (67 aa)). Positions 354, 357, 370, 373, 378, 381, 406, and 409 each coordinate Zn(2+).

Can form homooligomers (monomers, dimers and tetramers). Interacts with RAB11A (GDP-bound form); regulates RAB11A. Interacts with FKBP8; may negatively regulate ZFYVE27 phosphorylation. Isoform 1 interacts to a greater extent than isoform 2 with VAPB (via MSP domain). Isoform 1 interacts to a greater extent than isoform 2 with VAPA (via MSP domain). Interaction with VAPA may regulate ZFYVE27 retention in the endoplasmic reticulum and its function in cell projections formation. Interacts with ATL2, ATL3, SPAST and RTN3. Interacts with REEP1, REEP5 and ATL1. Interacts with RAB11B (GDP-bound form), SURF4, KIF5B and KIF5C. Isoform 1 and 2 interact with KIFA. In terms of processing, phosphorylated. Phosphorylation is induced by NGF through the MAPK/ERK pathway and modulates interaction with RAB11A. As to expression, astrocytes express both isoform 1 and isoform 2 and oligodendrocytes express only isoform 2 (at protein level). Isoform 1 is expressed specifically in the central nervous system and selectively in neuronal cells. Isoform 2 is expressed in cerebrum, cerebellum, spinal cord, heart, thymus, spleen, intestine and lung.

Its subcellular location is the recycling endosome membrane. It is found in the endoplasmic reticulum membrane. It localises to the cell projection. The protein resides in the growth cone membrane. Its function is as follows. Key regulator of RAB11-dependent vesicular trafficking during neurite extension through polarized membrane transport. Promotes axonal elongation and contributes to the establishment of neuronal cell polarity. Involved in nerve growth factor-induced neurite formation in VAPA-dependent manner. Contributes to both the formation and stabilization of the tubular ER network. Involved in ER morphogenesis by regulating the sheet-to-tubule balance and possibly the density of tubule interconnections. Acts as an adapter protein that facilitates the interaction of KIF5A with VAPA, VAPB, SURF4, RAB11A, RAB11B and RTN3 and the ZFYVE27-KIF5A complex contributes to the transport of these proteins in neurons. Can induce formation of neurite-like membrane protrusions in non-neuronal cells in a KIF5A/B-dependent manner. This Mus musculus (Mouse) protein is Protrudin (Zfyve27).